A 188-amino-acid chain; its full sequence is Putative pre-16S rRNA nuclease (188 aa).

Positions 144-188 (HAPGRVVAGPKGRRKARHRGQGGTGTEQQADAGGRARPHATEGKG) are disordered. Over residues 154 to 163 (KGRRKARHRG) the composition is skewed to basic residues.

This sequence belongs to the YqgF nuclease family.

Its subcellular location is the cytoplasm. Functionally, could be a nuclease involved in processing of the 5'-end of pre-16S rRNA. This Kineococcus radiotolerans (strain ATCC BAA-149 / DSM 14245 / SRS30216) protein is Putative pre-16S rRNA nuclease.